Here is a 3393-residue protein sequence, read N- to C-terminus: MVNPKGVNVMAARVKRAAQKTKKKAVQVSRGLRGFVLFVLTQLFMGRKLTPNVRRLWKSSDKNSLIHVLTKIKKIVGNLLMGVSRRKKRRSATTSGTVFMAMLGLTLAASVARHAHHTLINITKDDAHKLLTLRNGNCTVVATDIGNWCPDNVEYDCVTLQDNEDPDDVDCWCYRVNNVRVTYGRCKDGNTPRRSKRAVVITAHLDQGLTTKKETWLGSSHFETQVQKVEKWIIRNPTYAIAAILMSWYIGNSLKQRVVLLLLTLALGPAYATHCVGIPKRDFVQGVQGTTWVNLVLEQGGCVTIMAEGKPSVDVWMDNIKFTSPTLVRRISHTATISDTKIATACPSNGEAKLDEEHIKEYACKRLYSDRGWGNGCGLFGKGSLVACAKYESTGHMDVYEMDMTKVEYTVKTQVHSGAKSGDLSGVKTVSFAPTSGSQPVEFSGYGNMGLQCMIQSNVDFSTHYLVVMGNDAWLVHKAWVEDITLPWKHGEGGTWKDKQYMVEFGEPHATTVKVLALGPQEGALRNALAGAMIVTYESSGKTFKLHGGHVTCKATVSGLALKGTTYTNCRGGLSFVKTPTDTGHGTVVMQVKVAKSAPCRLTAIAADDASGHVNRGTLVTSNPIAASNNDEVMIEINPPYGTSYLIVGVGDDKLVYQWKKSGSTIGSLFSETVKGAQRMAIVGSSSWDFSSTSGFFSSVGKAIHTVFGTAFHGIFGGLSWMTRILIGVLLVWLGLNSRNGTATTLMMLTGFIILFLSLGVGAEVGCSVNWGQKELKCGDGIFVYNDVDDWMHKYKYHPEDPKVMAGLIAKAWEKGACGLTSVSELEHVMWVKIASEINAILEENEIDLTVVVHENKSVYRRGSRRFPRVETELTYGWESWGKNFITDGKVSNNTFHVDGKEDQCASKNRVWNSLEIEEFGFGVFHTNVFLRQKADKTNSCDTTLMGAAVKGNVAAHADPGFWMESQENNGTWEIQSIEFTAYRECEWPVSHTVHGTQVMESDMFMPKGIGGPVSHLNRMQGYKVQTNGAWAYGKTVVQRELCPDTSVVVDSSCSDRGKSIRSTTTEGKVIKEWCCRSCTLPPVSYWTSEGCWYAMEVRPMKTPEKHLVRSWVTAGDSYPAWSIGLVAMFLFVDIMARSRPTRKMMIGGTMLLLAIMIMGELSYLDLLRYIIVVGEHFIERENGGDVAYMAIMAASHLRPGLMAMVFAKSMWSPKQRVLLALGCAILQPFLTAQASALVWEWADSIGLVLLIVQGMVRNKEKNWALVLLALCSPVSMPVIRKASMIIGTGGLLLSLWKGGGSSMRKGLPLFAASAARVLGLTKAHLSVLFILLITKNGKRTWPISECLAAVGIFGAAFGTMFSEDETLLGPLALVGVVLIVYTMFTQSDGLELVKAADISWSDEAVVSGEARRFDVALNDSGEFKLLDEPPVSWLNVSFLVVAIVASSLHPIALVVTLVAWTYWRTEKRSGVLWDVPLAPKVEACEHLEDGVFRIIQKGLFGSSQVGIGVAKDGVFHTMWHVTRGAFLMHSGKQLTPTWGSVRKDLVCYGGTWKLDGAWNGVDEVQLIAVPPGKPATNVQTKPGTFVLPTGDEAGAVLLDFPSGTSGSPIIDRHGNILGLYGNGIVLENGAYASAISQAQPGSVAEVETPGLDKMLRKGEFTMLDYHPGAGKTRKHLPNILKECERKRLRTLVLAPTRVVLSEMKEALTSVQAKFHTQAFNSTTTGREIIDVMCHATFVHRMLEGLRSGNWEVIIMDEAHFLDPTSIAARGWAHHKSKTKESAVIFMTATPPGTSNEFPESNAEIEDVKKEIPSEPWSKGHEWILEDRRPTVWFLPSIKAANVMAACLRKAERSVVVLNRSTFENVYPTIKTKKPDFILATDIAEMGANLPVERVIDCRTAYKPVLVDERVALKGPLRIAAAAAAQRRGRVGRNPDRDGDTYVYSEDTCEQNDHLVCWTEGSMLLDNMQVKGGFVAPLYEEEASKTTMTPGECRLRDDQRKVFRTLIRKHDMPVWLSWQVAKSGLAADDRKWCFDGEDDNAILGDNGEVIKARSPGGQRKELKPRWSDARIASDNTSLMNFIAFAEGRRSLPLSILWSVPNQLSEKLVQSIDTLTILLRSEEGSRAHKLALQQAPEAVSTLLLLGMMAICTLGLVILLMKPKATDKMSMAMVTMAITGYLLKLGGMTHAQVGGILLVFFIMMVVIIPESGTQRSINDNKLAYVIILVGLVIGGVACNELGWLEKTKADLFGNNMTHAQTVVLPTINWNWLDFRPGAAWSLYVGMATFLTPVFVHWIKNEYGNASLTGITPTAGILGALNQGVPFVKLNTSVGVLLLSVWNNFTTSSMLAAMVMLACHCLFVLPGVRAQCLREAQIRVFHGVAKNPMVDGNPTVDLEKENDMPDLYEKKLALVALGMAAVLNAAMVRTALTTAEMVVLGSAAVGPLLEGNTSAFWNGPLAVAVAGVMRGNHYALIGIVYNLWLLKTARRGGSSALTYGEVWKRQLNLLGKQEFMNYKVSDILEVDRSHAREVLNSGNDAVGVAVSRGSSKLNWLIERGYLRPTGRVVDLGCGRGGWSYTCAAERQVTSVKAYTLGKEGHEKPRLIQSLGWNIIKFKDKSDITRMTPHASDTLLCDIGESSSNPEVEKERTLRVIEAVEKWMSPTTVSFCFKVLAPYKPDVIEALERFQLKHGGGIIRNPYSRNSTHEMYYVSGVRNNILHMVNSTSRMLMRRMSRPSGRSTVVPDLIYPTGTRSVASEAGPLDLEKVKARINRLKEEQESTWFVDSDHPYRTWHYHGSYVAKQSGTAASMINGVVKLLSGPWDRIEEVTNMAMTDTTPFGQQRVFKEKVDTRAPEPPQGTREIMKVVNQWLFDYLGRTKQPRICTKEEFINKVRSHAALGGILTEQEGWSSAAEAVADPRFWSLVDKERQAHLEGRCETCIYNMMGKREKKPSEFGRAKGSRAIWYMWLGARFLEFEALGFLNEDHWLGRENSKAGVEGIGLQYLGYVVEEVARKGNGLVYADDTAGWDTRITEADLEDEQYIMKRMSAEHRQLAWAVMELTYRNKVVKVPRPGPGGKILMDVISRRDQRGSGQVVTYPLNTATNMKVQLIRMAEAENVITRNDVEKVSLITLKELQLWLEVNGVNRLERMAVSGDDCIVAPVDESFAGALHHLNAMSKTRKDISEWENSRGWTDWESVPFCSHHFHTLYLKDGRTIIAPCRCQDELIGRARISPGNGWMIKETAGLSKAYTQMWTLMYFHRRDLRLMANAICSAVPIDWVPTGRTTWSIHATGEWMSSDDMLEVWNKVWIQDNPHVKDKTPIFAWRDVPYIQKGQDRACGSLVGTSLRASWAESIMTSVHRVRMLIGNERYVNYMESMDRYATQRCSAYGELL.

The Cytoplasmic segment spans residues 1 to 91 (MVNPKGVNVM…GVSRRKKRRS (91 aa)). The tract at residues 28-60 (VSRGLRGFVLFVLTQLFMGRKLTPNVRRLWKSS) is hydrophobic; homodimerization of capsid protein C. Positions 91 to 108 (SATTSGTVFMAMLGLTLA) are cleaved as a propeptide — ER anchor for the capsid protein C, removed in mature form by serine protease NS3. A helical transmembrane segment spans residues 92–112 (ATTSGTVFMAMLGLTLAASVA). At 113–231 (RHAHHTLINI…FETQVQKVEK (119 aa)) the chain is on the extracellular side. Asn-121 and Asn-137 each carry an N-linked (GlcNAc...) asparagine; by host glycan. The helical transmembrane segment at 232–252 (WIIRNPTYAIAAILMSWYIGN) threads the bilayer. Residues 253–257 (SLKQR) lie on the Cytoplasmic side of the membrane. A helical membrane pass occupies residues 258 to 272 (VVLLLLTLALGPAYA). Topologically, residues 273–713 (THCVGIPKRD…IHTVFGTAFH (441 aa)) are extracellular. Intrachain disulfides connect Cys-275/Cys-302, Cys-346/Cys-377, Cys-364/Cys-388, Cys-453/Cys-553, and Cys-570/Cys-600. The segment at 370–383 (DRGWGNGCGLFGKG) is fusion peptide. A helical membrane pass occupies residues 714–734 (GIFGGLSWMTRILIGVLLVWL). Residues 735-745 (GLNSRNGTATT) are Cytoplasmic-facing. A helical transmembrane segment spans residues 746–763 (LMMLTGFIILFLSLGVGA). The Extracellular segment spans residues 764–1112 (EVGCSVNWGQ…TPEKHLVRSW (349 aa)). Cystine bridges form between Cys-767–Cys-778, Cys-818–Cys-905, Cys-941–Cys-986, Cys-1043–Cys-1092, Cys-1054–Cys-1075, Cys-1054–Cys-1076, Cys-1075–Cys-1079, and Cys-1076–Cys-1079. Asn-893 and Asn-970 each carry an N-linked (GlcNAc...) asparagine; by host glycan. Residues 1113–1133 (VTAGDSYPAWSIGLVAMFLFV) traverse the membrane as a helical segment. The Cytoplasmic portion of the chain corresponds to 1134-1186 (DIMARSRPTRKMMIGGTMLLLAIMIMGELSYLDLLRYIIVVGEHFIERENGGD). The chain crosses the membrane as a helical span at residues 1187–1207 (VAYMAIMAASHLRPGLMAMVF). Topologically, residues 1208–1283 (AKSMWSPKQR…PVSMPVIRKA (76 aa)) are lumenal. Residues 1284–1304 (SMIIGTGGLLLSLWKGGGSSM) traverse the membrane as a helical segment. Topologically, residues 1305–1341 (RKGLPLFAASAARVLGLTKAHLSVLFILLITKNGKRT) are cytoplasmic. The helical transmembrane segment at 1342 to 1362 (WPISECLAAVGIFGAAFGTMF) threads the bilayer. The Lumenal segment spans residues 1363-1365 (SED). The helical transmembrane segment at 1366 to 1386 (ETLLGPLALVGVVLIVYTMFT) threads the bilayer. Topologically, residues 1387–1438 (QSDGLELVKAADISWSDEAVVSGEARRFDVALNDSGEFKLLDEPPVSWLNVS) are cytoplasmic. Residues 1393 to 1432 (LVKAADISWSDEAVVSGEARRFDVALNDSGEFKLLDEPPV) are interacts with and activates NS3 protease. The segment at residues 1439-1459 (FLVVAIVASSLHPIALVVTLV) is an intramembrane region (helical). Over 1460 to 2137 (AWTYWRTEKR…KLALQQAPEA (678 aa)) the chain is Cytoplasmic. The Peptidase S7 domain maps to 1470-1649 (SGVLWDVPLA…QPGSVAEVET (180 aa)). Active-site charge relay system; for serine protease NS3 activity residues include His-1521, Asp-1545, and Ser-1606. The Helicase ATP-binding domain occupies 1653–1809 (DKMLRKGEFT…ESNAEIEDVK (157 aa)). Positions 1657–1660 (RKGE) are important for RNA-binding. 1666–1673 (YHPGAGKT) is a binding site for ATP. Residues 1757-1760 (DEAH) carry the DEAH box motif. One can recognise a Helicase C-terminal domain in the interval 1804–1984 (EIEDVKKEIP…VAPLYEEEAS (181 aa)). Residues 2138-2158 (VSTLLLLGMMAICTLGLVILL) traverse the membrane as a helical segment. Residues 2159-2168 (MKPKATDKMS) lie on the Lumenal side of the membrane. The helical intramembrane region spans 2169–2184 (MAMVTMAITGYLLKLG). Position 2185 (Gly-2185) is a topological domain, lumenal. A helical transmembrane segment spans residues 2186–2206 (MTHAQVGGILLVFFIMMVVII). The Cytoplasmic segment spans residues 2207-2221 (PESGTQRSINDNKLA). A helical transmembrane segment spans residues 2222–2236 (YVIILVGLVIGGVAC). Residues 2237–2275 (NELGWLEKTKADLFGNNMTHAQTVVLPTINWNWLDFRPG) are Lumenal-facing. An intramembrane region (helical) is located at residues 2276 to 2296 (AAWSLYVGMATFLTPVFVHWI). Over 2297–2344 (KNEYGNASLTGITPTAGILGALNQGVPFVKLNTSVGVLLLSVWNNFTT) the chain is Lumenal. Residues 2345-2365 (SSMLAAMVMLACHCLFVLPGV) form a helical membrane-spanning segment. The Cytoplasmic segment spans residues 2366-2408 (RAQCLREAQIRVFHGVAKNPMVDGNPTVDLEKENDMPDLYEKK). A helical transmembrane segment spans residues 2409-2429 (LALVALGMAAVLNAAMVRTAL). At 2430-2457 (TTAEMVVLGSAAVGPLLEGNTSAFWNGP) the chain is on the lumenal side. The chain crosses the membrane as a helical span at residues 2458-2478 (LAVAVAGVMRGNHYALIGIVY). The Cytoplasmic segment spans residues 2479-3393 (NLWLLKTARR…QRCSAYGELL (915 aa)). The 265-residue stretch at 2489–2753 (GGSSALTYGE…DLIYPTGTRS (265 aa)) folds into the mRNA cap 0-1 NS5-type MT domain. S-adenosyl-L-methionine is bound at residue Ser-2544. The residue at position 2544 (Ser-2544) is a Phosphoserine. The active-site For 2'-O-MTase activity is the Lys-2549. Residues Gly-2574, Trp-2575, Thr-2592, Leu-2593, Asp-2619, and Ile-2620 each contribute to the S-adenosyl-L-methionine site. Catalysis depends on Asp-2634, which acts as the For 2'-O-MTase activity. Ile-2635 is an S-adenosyl-L-methionine binding site. Active-site for 2'-O-MTase activity residues include Lys-2670 and Glu-2706. S-adenosyl-L-methionine is bound at residue Tyr-2708. A Nuclear localization signal motif is present at residues 2860-2893 (REIMKVVNQWLFDYLGRTKQPRICTKEEFINKVR). Residues Glu-2927, His-2931, Cys-2936, and Cys-2939 each contribute to the Zn(2+) site. The region spanning 3017–3169 (GLVYADDTAG…APVDESFAGA (153 aa)) is the RdRp catalytic domain. Zn(2+) is bound by residues His-3204, Cys-3220, and Cys-3339.

The protein in the N-terminal section; belongs to the class I-like SAM-binding methyltransferase superfamily. mRNA cap 0-1 NS5-type methyltransferase family. Homodimer. Interacts (via N-terminus) with host EXOC1 (via C-terminus); this interaction results in EXOC1 degradation through the proteasome degradation pathway. In terms of assembly, forms heterodimers with envelope protein E in the endoplasmic reticulum and Golgi. As to quaternary structure, homodimer; in the endoplasmic reticulum and Golgi. Interacts with protein prM. Interacts with non-structural protein 1. Homodimer; Homohexamer when secreted. Interacts with envelope protein E. In terms of assembly, interacts (via N-terminus) with serine protease NS3. As to quaternary structure, forms a heterodimer with serine protease NS3. May form homooligomers. Forms a heterodimer with NS2B. Interacts with non-structural protein 2A (via N-terminus). Interacts with NS4B. Interacts with unphosphorylated RNA-directed RNA polymerase NS5; this interaction stimulates RNA-directed RNA polymerase NS5 guanylyltransferase activity. NS3 interacts with host PDCD6IP; this interaction contributes to virion release. In terms of assembly, interacts with serine protease NS3. As to quaternary structure, homodimer. Interacts with host STAT2; this interaction prevents the establishment of cellular antiviral state. Interacts with host TRIM23; this interaction leads to NS5 ubiquitination. Specific enzymatic cleavages in vivo yield mature proteins. The nascent capsid protein C contains a C-terminal hydrophobic domain that act as a signal sequence for translocation of prM into the lumen of the ER. Mature capsid protein C is cleaved at a site upstream of this hydrophobic domain by NS3. prM is cleaved in post-Golgi vesicles by a host furin, releasing the mature small envelope protein M, and peptide pr. Non-structural protein 2A-alpha, a C-terminally truncated form of non-structural protein 2A, results from partial cleavage by NS3. Specific enzymatic cleavages in vivo yield mature proteins peptide 2K acts as a signal sequence and is removed from the N-terminus of NS4B by the host signal peptidase in the ER lumen. Signal cleavage at the 2K-4B site requires a prior NS3 protease-mediated cleavage at the 4A-2K site. In terms of processing, cleaved in post-Golgi vesicles by a host furin, releasing the mature small envelope protein M, and peptide pr. This cleavage is incomplete as up to 30% of viral particles still carry uncleaved prM. Post-translationally, N-glycosylated. N-glycosylated. The excreted form is glycosylated and this is required for efficient secretion of the protein from infected cells. In terms of processing, polyubiquitinated; ubiquitination is probably mediated by host TRIM23 and is prerequisite for NS5-STAT2 interaction. NS5 is not ISGylated or sumoylated. Post-translationally, phosphorylated on serines residues. This phosphorylation may trigger NS5 nuclear localization.

It localises to the virion. It is found in the host nucleus. The protein localises to the host cytoplasm. Its subcellular location is the host perinuclear region. The protein resides in the secreted. It localises to the virion membrane. It is found in the host endoplasmic reticulum membrane. The enzyme catalyses Selective hydrolysis of -Xaa-Xaa-|-Yaa- bonds in which each of the Xaa can be either Arg or Lys and Yaa can be either Ser or Ala.. The catalysed reaction is RNA(n) + a ribonucleoside 5'-triphosphate = RNA(n+1) + diphosphate. It catalyses the reaction a ribonucleoside 5'-triphosphate + H2O = a ribonucleoside 5'-diphosphate + phosphate + H(+). It carries out the reaction ATP + H2O = ADP + phosphate + H(+). The enzyme catalyses a 5'-end (5'-triphosphoguanosine)-ribonucleoside in mRNA + S-adenosyl-L-methionine = a 5'-end (N(7)-methyl 5'-triphosphoguanosine)-ribonucleoside in mRNA + S-adenosyl-L-homocysteine. The catalysed reaction is a 5'-end (N(7)-methyl 5'-triphosphoguanosine)-ribonucleoside in mRNA + S-adenosyl-L-methionine = a 5'-end (N(7)-methyl 5'-triphosphoguanosine)-(2'-O-methyl-ribonucleoside) in mRNA + S-adenosyl-L-homocysteine + H(+). Plays a role in virus budding by binding to the cell membrane and gathering the viral RNA into a nucleocapsid that forms the core of a mature virus particle. During virus entry, may induce genome penetration into the host cytoplasm after hemifusion induced by the surface proteins. Can migrate to the cell nucleus where it modulates host functions. Its function is as follows. Inhibits RNA silencing by interfering with host Dicer. Functionally, prevents premature fusion activity of envelope proteins in trans-Golgi by binding to envelope protein E at pH6.0. After virion release in extracellular space, gets dissociated from E dimers. In terms of biological role, acts as a chaperone for envelope protein E during intracellular virion assembly by masking and inactivating envelope protein E fusion peptide. prM is the only viral peptide matured by host furin in the trans-Golgi network probably to avoid catastrophic activation of the viral fusion activity in acidic Golgi compartment prior to virion release. prM-E cleavage is inefficient, and many virions are only partially matured. These uncleaved prM would play a role in immune evasion. May play a role in virus budding. Exerts cytotoxic effects by activating a mitochondrial apoptotic pathway through M ectodomain. May display a viroporin activity. Its function is as follows. Binds to host cell surface receptor and mediates fusion between viral and cellular membranes. Envelope protein is synthesized in the endoplasmic reticulum in the form of heterodimer with protein prM. They play a role in virion budding in the ER, and the newly formed immature particle is covered with 60 spikes composed of heterodimer between precursor prM and envelope protein E. The virion is transported to the Golgi apparatus where the low pH causes dissociation of PrM-E heterodimers and formation of E homodimers. prM-E cleavage is inefficient, and many virions are only partially matured. These uncleaved prM would play a role in immune evasion. Functionally, involved in immune evasion, pathogenesis and viral replication. Once cleaved off the polyprotein, is targeted to three destinations: the viral replication cycle, the plasma membrane and the extracellular compartment. Essential for viral replication. Required for formation of the replication complex and recruitment of other non-structural proteins to the ER-derived membrane structures. Excreted as a hexameric lipoparticle that plays a role against host immune response. Antagonizing the complement function. Binds to the host macrophages and dendritic cells. Inhibits signal transduction originating from Toll-like receptor 3 (TLR3). In terms of biological role, component of the viral RNA replication complex that functions in virion assembly and antagonizes the host immune response. Required cofactor for the serine protease function of NS3. May have membrane-destabilizing activity and form viroporins. Its function is as follows. Displays three enzymatic activities: serine protease, NTPase and RNA helicase. NS3 serine protease, in association with NS2B, performs its autocleavage and cleaves the polyprotein at dibasic sites in the cytoplasm: C-prM, NS2A-NS2B, NS2B-NS3, NS3-NS4A, NS4A-2K and NS4B-NS5. NS3 RNA helicase binds RNA and unwinds dsRNA in the 3' to 5' direction. Also plays a role in virus assembly. Functionally, regulates the ATPase activity of the NS3 helicase activity. NS4A allows NS3 helicase to conserve energy during unwinding. In terms of biological role, functions as a signal peptide for NS4B and is required for the interferon antagonism activity of the latter. Induces the formation of ER-derived membrane vesicles where the viral replication takes place. Inhibits interferon (IFN)-induced host STAT1 phosphorylation and nuclear translocation, thereby preventing the establishment of cellular antiviral state by blocking the IFN-alpha/beta pathway. Its function is as follows. Replicates the viral (+) and (-) RNA genome, and performs the capping of genomes in the cytoplasm. NS5 methylates viral RNA cap at guanine N-7 and ribose 2'-O positions. Besides its role in RNA genome replication, also prevents the establishment of cellular antiviral state by blocking the interferon-alpha/beta (IFN-alpha/beta) signaling pathway. IFN-I induces binding of NS5 to host IFN-activated transcription factor STAT2, preventing its transcriptional activity. Host TRIM23 is the E3 ligase that interacts with and polyubiquitinates NS5 to promote its binding to STAT2 and trigger IFN-I signaling inhibition. This Banzi virus (BANV) protein is Genome polyprotein.